The chain runs to 914 residues: Chlorate reductase subunit alpha (914 aa).

Residues 1-32 (MNSPDEHNGRRRFLQFSAAALASAAASPSLWA) constitute a signal peptide (tat-type signal). The region spanning 62-125 (DSVGVMTHSN…VYCSWSKQPD (64 aa)) is the 4Fe-4S Mo/W bis-MGD-type domain. Residues histidine 69, cysteine 73, cysteine 77, and cysteine 111 each contribute to the [4Fe-4S] cluster site. A Mo-bis(molybdopterin guanine dinucleotide)-binding site is contributed by aspartate 205.

It belongs to the prokaryotic molybdopterin-containing oxidoreductase family. As to quaternary structure, heterotrimer of alpha, beta and gamma subunits. [4Fe-4S] cluster is required as a cofactor. It depends on Mo-bis(molybdopterin guanine dinucleotide) as a cofactor. Post-translationally, predicted to be exported by the Tat system. The position of the signal peptide cleavage has not been experimentally proven.

Its subcellular location is the periplasm. It catalyses the reaction chlorate + AH2 = chlorite + A + H2O. In terms of biological role, terminal reductase that allows anaerobic growth on chlorate as the sole respiratory oxidant. The sequence is that of Chlorate reductase subunit alpha (clrA) from Ideonella dechloratans.